Here is a 202-residue protein sequence, read N- to C-terminus: CASP-like protein 2B1 (202 aa).

At 1–29 the chain is on the cytoplasmic side; sequence MSYLGVGVSPGNVPVYHGTNSKVIDRRVR. Residues 30-50 form a helical membrane-spanning segment; sequence LAELVLRCVICCLGVLAAVLV. Over 51–72 the chain is Extracellular; sequence GTDTQVKEIFSIQKKARFTDMK. Residues 73 to 93 traverse the membrane as a helical segment; sequence ALVFLVAANGIAAAYSFVQGV. Residues 94–109 lie on the Cytoplasmic side of the membrane; sequence RCVVGMVKGSVLFSKP. The chain crosses the membrane as a helical span at residues 110–132; that stretch reads LAWVIFSGDQMMAYLTMSAVAAA. Topologically, residues 133–164 are extracellular; it reads AQSSVFAKLGQPDLQWMKICTMYGKFCNQVGE. Residues 165 to 185 form a helical membrane-spanning segment; that stretch reads GIASALLVSVSMVVLSCISAF. Residues 186–202 lie on the Cytoplasmic side of the membrane; it reads SLFRLYGGNKGKDGARW.

This sequence belongs to the Casparian strip membrane proteins (CASP) family. As to quaternary structure, homodimer and heterodimers.

The protein resides in the cell membrane. This is CASP-like protein 2B1 from Populus trichocarpa (Western balsam poplar).